Here is a 383-residue protein sequence, read N- to C-terminus: Delta(12)-fatty-acid desaturase FAD2 (383 aa).

The next 2 helical transmembrane spans lie at 56-76 and 84-104; these read VVYD…YFHL and VAWP…WVIA. A Histidine box-1 motif is present at residues 105–109; that stretch reads HECGH. A helical transmembrane segment spans residues 117 to 137; sequence LLDDIVGLVLHSCLLVPYFSW. The Histidine box-2 motif lies at 141-145; that stretch reads HRRHH. 3 helical membrane-spanning segments follow: residues 179–199, 225–245, and 249–269; these read LFTL…FNVS, IYIS…LAAA, and AWVI…LVMI. The Histidine box-3 signature appears at 315–319; the sequence is HVAHH.

The protein belongs to the fatty acid desaturase type 1 family. Expressed in leaves and seeds.

It localises to the endoplasmic reticulum membrane. It catalyses the reaction (9Z)-octadecenoyl-CoA + 2 Fe(II)-[cytochrome b5] + O2 + 2 H(+) = (9Z,12Z)-octadecadienoyl-CoA + 2 Fe(III)-[cytochrome b5] + 2 H2O. The enzyme catalyses (9Z)-hexadecenoyl-CoA + 2 Fe(II)-[cytochrome b5] + O2 + 2 H(+) = (9Z,12Z)-hexadecadienoyl-CoA + 2 Fe(III)-[cytochrome b5] + 2 H2O. It functions in the pathway lipid metabolism; polyunsaturated fatty acid biosynthesis. Functionally, catalyzes the desaturation of oleic acid (18:1(9Z)) to linoleic acid (18:2(9Z,12Z)). This is Delta(12)-fatty-acid desaturase FAD2 from Vernicia fordii (Tung).